Reading from the N-terminus, the 829-residue chain is Probable receptor-like protein kinase At5g59700 (829 aa).

Positions 1-24 (MGGEKFGFLIWILSIPCLIFLCYG) are cleaved as a signal peptide. Residues 25-406 (YVPVDNYLIN…SSTTKKNVGM (382 aa)) are Extracellular-facing. N-linked (GlcNAc...) asparagine glycosylation is found at asparagine 40, asparagine 216, asparagine 279, and asparagine 380. A helical transmembrane segment spans residues 407–427 (IIGLTIGSLLALVVLGGFFVL). Residues 428–829 (YKKRGRDQDG…FSQLIKSEGR (402 aa)) are Cytoplasmic-facing. The 274-residue stretch at 482–755 (FDENRAIGVG…GDVLWNLEYA (274 aa)) folds into the Protein kinase domain. Residues 488-496 (IGVGGFGKV) and lysine 510 contribute to the ATP site. Aspartate 606 functions as the Proton acceptor in the catalytic mechanism.

Belongs to the protein kinase superfamily. Ser/Thr protein kinase family.

It localises to the cell membrane. This chain is Probable receptor-like protein kinase At5g59700, found in Arabidopsis thaliana (Mouse-ear cress).